Reading from the N-terminus, the 940-residue chain is UvrABC system protein A (940 aa).

Position 31–38 (31–38) interacts with ATP; that stretch reads GLSGSGKS. The C4-type zinc-finger motif lies at 252–279; it reads CPQCGYSMQELEPRLFSFNNPAGACGTC. ABC transporter domains lie at 309–586 and 606–936; these read WDQK…PNSL and RDPK…RFLK. 639–646 lines the ATP pocket; the sequence is GVSGSGKS. A C4-type zinc finger spans residues 739–765; sequence CEACQGDGVIKVEMHFLPDVYVPCDVC.

It belongs to the ABC transporter superfamily. UvrA family. Forms a heterotetramer with UvrB during the search for lesions.

Its subcellular location is the cytoplasm. The UvrABC repair system catalyzes the recognition and processing of DNA lesions. UvrA is an ATPase and a DNA-binding protein. A damage recognition complex composed of 2 UvrA and 2 UvrB subunits scans DNA for abnormalities. When the presence of a lesion has been verified by UvrB, the UvrA molecules dissociate. The sequence is that of UvrABC system protein A from Vibrio parahaemolyticus serotype O3:K6 (strain RIMD 2210633).